Consider the following 500-residue polypeptide: Aldehyde dehydrogenase, mitochondrial (500 aa).

4 positions are modified to N6-acetyllysine: Lys-35, Lys-56, Lys-61, and Lys-142. 245–250 (GSTEVG) contributes to the NAD(+) binding site. Catalysis depends on Glu-268, which acts as the Proton acceptor. The active-site Nucleophile is the Cys-302. N6-acetyllysine occurs at positions 351, 358, 366, 390, 409, 411, 424, and 434.

The protein belongs to the aldehyde dehydrogenase family. As to quaternary structure, homotetramer. In terms of processing, in response to mitochondrial stress, the precursor protein is ubiquitinated by the SIFI complex in the cytoplasm before mitochondrial import, leading to its degradation. Within the SIFI complex, UBR4 initiates ubiquitin chain that are further elongated or branched by KCMF1.

It is found in the mitochondrion matrix. The catalysed reaction is an aldehyde + NAD(+) + H2O = a carboxylate + NADH + 2 H(+). It functions in the pathway alcohol metabolism; ethanol degradation; acetate from ethanol: step 2/2. Required for clearance of cellular formaldehyde, a cytotoxic and carcinogenic metabolite that induces DNA damage. This Mesocricetus auratus (Golden hamster) protein is Aldehyde dehydrogenase, mitochondrial (ALDH2).